The chain runs to 393 residues: NADH-quinone oxidoreductase subunit D (393 aa).

Belongs to the complex I 49 kDa subunit family. In terms of assembly, NDH-1 is composed of 14 different subunits. Subunits NuoB, C, D, E, F, and G constitute the peripheral sector of the complex.

Its subcellular location is the cell inner membrane. It catalyses the reaction a quinone + NADH + 5 H(+)(in) = a quinol + NAD(+) + 4 H(+)(out). Functionally, NDH-1 shuttles electrons from NADH, via FMN and iron-sulfur (Fe-S) centers, to quinones in the respiratory chain. The immediate electron acceptor for the enzyme in this species is believed to be ubiquinone. Couples the redox reaction to proton translocation (for every two electrons transferred, four hydrogen ions are translocated across the cytoplasmic membrane), and thus conserves the redox energy in a proton gradient. The sequence is that of NADH-quinone oxidoreductase subunit D from Ehrlichia ruminantium (strain Gardel).